The sequence spans 436 residues: Trigger factor (436 aa).

A PPIase FKBP-type domain is found at G161–P246.

This sequence belongs to the FKBP-type PPIase family. Tig subfamily.

The protein resides in the cytoplasm. The catalysed reaction is [protein]-peptidylproline (omega=180) = [protein]-peptidylproline (omega=0). Functionally, involved in protein export. Acts as a chaperone by maintaining the newly synthesized protein in an open conformation. Functions as a peptidyl-prolyl cis-trans isomerase. The chain is Trigger factor from Aeromonas hydrophila subsp. hydrophila (strain ATCC 7966 / DSM 30187 / BCRC 13018 / CCUG 14551 / JCM 1027 / KCTC 2358 / NCIMB 9240 / NCTC 8049).